Consider the following 203-residue polypeptide: Putative archaetidylserine decarboxylase proenzyme (203 aa).

The active-site Schiff-base intermediate with substrate; via pyruvic acid is serine 171. Serine 171 is subject to Pyruvic acid (Ser); by autocatalysis.

It belongs to the phosphatidylserine decarboxylase family. PSD-A subfamily. As to quaternary structure, heterodimer of a large membrane-associated beta subunit and a small pyruvoyl-containing alpha subunit. Requires pyruvate as cofactor. Is synthesized initially as an inactive proenzyme. Formation of the active enzyme involves a self-maturation process in which the active site pyruvoyl group is generated from an internal serine residue via an autocatalytic post-translational modification. Two non-identical subunits are generated from the proenzyme in this reaction, and the pyruvate is formed at the N-terminus of the alpha chain, which is derived from the carboxyl end of the proenzyme. The post-translation cleavage follows an unusual pathway, termed non-hydrolytic serinolysis, in which the side chain hydroxyl group of the serine supplies its oxygen atom to form the C-terminus of the beta chain, while the remainder of the serine residue undergoes an oxidative deamination to produce ammonia and the pyruvoyl prosthetic group on the alpha chain.

It localises to the cell membrane. The enzyme catalyses archaetidylserine + H(+) = archaetidylethanolamine + CO2. Functionally, catalyzes the formation of archaetidylethanolamine (PtdEtn) from archaetidylserine (PtdSer). This chain is Putative archaetidylserine decarboxylase proenzyme, found in Methanosarcina barkeri (strain Fusaro / DSM 804).